Here is a 620-residue protein sequence, read N- to C-terminus: Glutathione-regulated potassium-efflux system protein KefC (620 aa).

Transmembrane regions (helical) follow at residues 4 to 24, 26 to 46, 54 to 74, 90 to 110, 114 to 134, 149 to 169, 178 to 198, 218 to 238, 270 to 290, 294 to 314, 327 to 347, and 359 to 379; these read HTLV…PIAV, LGLG…LWGL, SILH…GLEL, GALQ…LLGL, VAEL…MQAM, FAVL…IPLL, MGAF…VVLL, VFSA…EEVG, GLLL…GTLI, LRIV…LWLI, WFAV…GAAQ, and SLTL…VILN. Residues 399-518 form the RCK N-terminal domain; the sequence is QPRVIIAGFG…AGVEKPERET (120 aa). Residues 597-620 are disordered; sequence GWQGTEEGKHTGNMADEPETKPSS.

Belongs to the monovalent cation:proton antiporter 2 (CPA2) transporter (TC 2.A.37) family. KefC subfamily. As to quaternary structure, homodimer. Interacts with the regulatory subunit KefF.

The protein resides in the cell inner membrane. Functionally, pore-forming subunit of a potassium efflux system that confers protection against electrophiles. Catalyzes K(+)/H(+) antiport. This Shigella flexneri serotype 5b (strain 8401) protein is Glutathione-regulated potassium-efflux system protein KefC.